A 351-amino-acid polypeptide reads, in one-letter code: MSSANIPATQSALIFEKYGGPLEVRQVSVPQPQENELLVKIEYSGICHSDLHTWEGDFEYASICPLIGGHEGAGTVVTIGSKVKGWNIGDRAGIKLINANCLNCEYCKTGHEPLCDHIQNYGIDRHGTFQEYLTIRDIDAIKVSNDTNLAAAAPVLCGGVTAYKSLKATNVKPGQIVVLTGAGGGLGSFGIQYAKAMGMRVVAVDHISKEDHCRNLGAEWFVDAFDTPDIVAHIRKLTNGGAHGVVSFAAAKKPMEYALEYVRKRGTVVFVGLPKDGTIPLDTLSLICNEITVKGSIVGSRMDVDEAIDFITRGIVHVPIELVKLEDVPSVYQRMKDGKVTSRVVVDFSMR.

Zn(2+)-binding residues include Cys47, His70, Cys101, Cys104, Cys107, Cys115, and Cys157. Residues 181 to 187, Asp205, Lys209, 271 to 273, and Arg343 each bind NAD(+); these read GAGGGLG and VGL.

The protein belongs to the zinc-containing alcohol dehydrogenase family. Homotetramer. The cofactor is Zn(2+).

The catalysed reaction is a primary alcohol + NAD(+) = an aldehyde + NADH + H(+). The enzyme catalyses a secondary alcohol + NAD(+) = a ketone + NADH + H(+). This chain is Alcohol dehydrogenase 2 (sodh-2), found in Caenorhabditis elegans.